The following is a 292-amino-acid chain: Cyclin-dependent kinase 5 homolog (292 aa).

The Protein kinase domain occupies 4 to 285 (YSKIEKLGEG…AAAALKHPYF (282 aa)). ATP contacts are provided by residues 10–18 (LGEGTYGIV) and lysine 33. A Phosphothreonine modification is found at threonine 14. Tyrosine 15 carries the post-translational modification Phosphotyrosine. The Proton acceptor role is filled by aspartate 126.

It belongs to the protein kinase superfamily. CMGC Ser/Thr protein kinase family. CDC2/CDKX subfamily.

It catalyses the reaction L-seryl-[protein] + ATP = O-phospho-L-seryl-[protein] + ADP + H(+). The enzyme catalyses L-threonyl-[protein] + ATP = O-phospho-L-threonyl-[protein] + ADP + H(+). With respect to regulation, phosphorylation at Thr-14 or Tyr-15 inactivates the enzyme. The polypeptide is Cyclin-dependent kinase 5 homolog (cdk5) (Dictyostelium discoideum (Social amoeba)).